The sequence spans 284 residues: Diaminopimelate epimerase (284 aa).

Positions 20, 53, and 73 each coordinate substrate. Cysteine 82 serves as the catalytic Proton donor. Substrate-binding positions include 83–84, asparagine 167, asparagine 200, and 218–219; these read GN and ER. The active-site Proton acceptor is cysteine 227. 228–229 contributes to the substrate binding site; that stretch reads GS.

The protein belongs to the diaminopimelate epimerase family. In terms of assembly, homodimer.

Its subcellular location is the cytoplasm. The enzyme catalyses (2S,6S)-2,6-diaminopimelate = meso-2,6-diaminopimelate. It functions in the pathway amino-acid biosynthesis; L-lysine biosynthesis via DAP pathway; DL-2,6-diaminopimelate from LL-2,6-diaminopimelate: step 1/1. In terms of biological role, catalyzes the stereoinversion of LL-2,6-diaminopimelate (L,L-DAP) to meso-diaminopimelate (meso-DAP), a precursor of L-lysine and an essential component of the bacterial peptidoglycan. This Xylella fastidiosa (strain 9a5c) protein is Diaminopimelate epimerase.